A 63-amino-acid polypeptide reads, in one-letter code: Synergistic-type venom protein C9S3, chain 1 (63 aa).

Cystine bridges form between Cys3–Cys24, Cys17–Cys42, and Cys46–Cys57.

This sequence belongs to the three-finger toxin family. Short-chain subfamily. Aminergic toxin sub-subfamily. Heterodimer of C9S3 chain 1 and chain 2 (AC P01409); disulfide-linked. As to expression, expressed by the venom gland.

It is found in the secreted. This protein shows a synergetic toxic effect in that it enhances the toxicity of other toxins. This Dendroaspis angusticeps (Eastern green mamba) protein is Synergistic-type venom protein C9S3, chain 1.